The sequence spans 64 residues: MFGKLGTSELVLILGIALIIFGPGKLPELGKSLGKAISEFKSFSKEVKEDISLDDKKANNTLND.

Residues 10–30 (LVLILGIALIIFGPGKLPELG) traverse the membrane as a helical segment.

Belongs to the TatA/E family. Forms a complex with TatC.

Its subcellular location is the cell membrane. Part of the twin-arginine translocation (Tat) system that transports large folded proteins containing a characteristic twin-arginine motif in their signal peptide across membranes. TatA could form the protein-conducting channel of the Tat system. This is Sec-independent protein translocase protein TatA from Alkaliphilus oremlandii (strain OhILAs) (Clostridium oremlandii (strain OhILAs)).